Reading from the N-terminus, the 185-residue chain is Ribosome-recycling factor (185 aa).

The interval 141–160 is disordered; the sequence is RIQKDGEAGEDEVGRAEKEL.

This sequence belongs to the RRF family.

It is found in the cytoplasm. Its function is as follows. Responsible for the release of ribosomes from messenger RNA at the termination of protein biosynthesis. May increase the efficiency of translation by recycling ribosomes from one round of translation to another. In Rhodococcus jostii (strain RHA1), this protein is Ribosome-recycling factor.